A 430-amino-acid chain; its full sequence is 26S protease regulatory subunit 6A (430 aa).

218-225 is a binding site for ATP; it reads GPPGTGKT.

It belongs to the AAA ATPase family. Component of the 19S proteasome regulatory particle complex. The 26S proteasome consists of a 20S core particle (CP) and two 19S regulatory subunits (RP). The regulatory particle is made of a lid composed of 9 subunits, a base containing 6 ATPases including the PSMC3 homolog rpt-5 and few additional components.

The protein resides in the cytoplasm. It is found in the nucleus. In terms of biological role, component of the 26S proteasome, a multiprotein complex involved in the ATP-dependent degradation of ubiquitinated proteins. This complex plays a key role in the maintenance of protein homeostasis by removing misfolded or damaged proteins, which could impair cellular functions, and by removing proteins whose functions are no longer required. Therefore, the proteasome participates in numerous cellular processes, including cell cycle progression, apoptosis, or DNA damage repair. Belongs to the heterohexameric ring of AAA (ATPases associated with diverse cellular activities) proteins that unfolds ubiquitinated target proteins that are concurrently translocated into a proteolytic chamber and degraded into peptides. This chain is 26S protease regulatory subunit 6A, found in Caenorhabditis elegans.